Consider the following 750-residue polypeptide: MIIRSPEPEVKILVDRDPIKTSFEEWAKPGHFSRTIAKGPDTTTWIWNLHADAHDFDSHTSDLEEISRKVFSAHFGQLSIIFLWLSGMYFHGARFSNYEAWLSDPTHIGPSAQVVWPIVGQEILNGDVGGGFRGIQITSGFFQIWRASGITSELQLYCTAIGALVFAALMLFAGWFHYHKAAPKLAWFQDVESMLNHHLAGLLGLGSLSWAGHQVHVSLPINQFLNAGVDPKEIPLPHEFILNRDLLAQLYPSFAEGATPFFTLNWSKYSEFLTFRGGLDPVTGGLWLTDIAHHHLAIAILFLIAGHMYRTNWGIGHGLKDILEAHKGPFTGQGHKGLYEILTTSWHAQLSLNLAMLGSLTIVVAHHMYAMPPYPYLATDYATQLSLFTHHMWIGGFLIVGAAAHAAIFMVRDYDPTNRYNDLLDRVLRHRDAIISHLNWVCIFLGFHSFGLYIHNDTMSALGRPQDMFSDTAIQLQPVFAQWIQNTHALAPGVTAPGETASTSLTWGGGELVAVGGKVALLPIPLGTADFLVHHIHAFTIHVTVLILLKGVLFARSSRLIPDKANLGFRFPCDGPGRGGTCQVSAWDHVFLGLFWMYNAISVVIFHFSWKMQSDVWGSISDQGVVTHITGGNFAQSSITINGWLRDFLWAQASQVIQSYGSSLSAYGLFFLGAHFVWAFSLMFLFSGRGYWQELIESIVWAHNKLKVAPATQPRALSIVQGRAVGVTHYLLGGIATTWAFFLARIIAVG.

8 helical membrane-spanning segments follow: residues 70-93, 156-179, 195-219, 291-309, 346-369, 385-411, 433-455, and 531-549; these read VFSA…FHGA, LYCT…FHYH, LNHH…HVSL, IAHH…GHMY, WHAQ…HHMY, LSLF…IFMV, AIIS…LYIH, and FLVH…LILL. [4Fe-4S] cluster is bound by residues Cys573 and Cys582. The next 2 helical transmembrane spans lie at 589–610 and 664–686; these read HVFL…HFSW and LSAY…MFLF. His675 lines the chlorophyll a' pocket. Met683 and Tyr691 together coordinate chlorophyll a. Trp692 contacts phylloquinone. Residues 724–744 traverse the membrane as a helical segment; it reads AVGVTHYLLGGIATTWAFFLA.

Belongs to the PsaA/PsaB family. As to quaternary structure, the PsaA/B heterodimer binds the P700 chlorophyll special pair and subsequent electron acceptors. PSI consists of a core antenna complex that captures photons, and an electron transfer chain that converts photonic excitation into a charge separation. The eukaryotic PSI reaction center is composed of at least 11 subunits. P700 is a chlorophyll a/chlorophyll a' dimer, A0 is one or more chlorophyll a, A1 is one or both phylloquinones and FX is a shared 4Fe-4S iron-sulfur center. is required as a cofactor.

The protein resides in the plastid. Its subcellular location is the chloroplast thylakoid membrane. The catalysed reaction is reduced [plastocyanin] + hnu + oxidized [2Fe-2S]-[ferredoxin] = oxidized [plastocyanin] + reduced [2Fe-2S]-[ferredoxin]. Functionally, psaA and PsaB bind P700, the primary electron donor of photosystem I (PSI), as well as the electron acceptors A0, A1 and FX. PSI is a plastocyanin-ferredoxin oxidoreductase, converting photonic excitation into a charge separation, which transfers an electron from the donor P700 chlorophyll pair to the spectroscopically characterized acceptors A0, A1, FX, FA and FB in turn. Oxidized P700 is reduced on the lumenal side of the thylakoid membrane by plastocyanin. This is Photosystem I P700 chlorophyll a apoprotein A1 from Draba nemorosa (Woodland whitlowgrass).